We begin with the raw amino-acid sequence, 277 residues long: MNQPSGNKLPHVTTRRMLDMKERGEKIAMLTAYDYTMARILDRSGVDAILVGDSASNVFAGHSTTLPMTVDEMIYHAKAVVRGVQAETRRAMVIVDMPFMSYQLSPEDAVRNAGKIMKEHECDAVKMEGGKVIAEAVKRITDIGIPVMGHLGLMPQSIYKYGSYKVRAMEEEEARQLIEDAKIIEEAGAFAIVLEKIPSKLAGEVSRLLTIPTIGIGAGPECDGQVLVINDMLGLSTDFRPRFVRRYADLSSVIEQAVKSYVEDVRSNSFPSEDESY.

The Mg(2+) site is built by aspartate 53 and aspartate 96. 3-methyl-2-oxobutanoate contacts are provided by residues 53-54 (DS), aspartate 96, and lysine 126. Glutamate 128 is a binding site for Mg(2+). Glutamate 195 acts as the Proton acceptor in catalysis.

This sequence belongs to the PanB family. In terms of assembly, homodecamer; pentamer of dimers. It depends on Mg(2+) as a cofactor.

The protein localises to the cytoplasm. The catalysed reaction is 3-methyl-2-oxobutanoate + (6R)-5,10-methylene-5,6,7,8-tetrahydrofolate + H2O = 2-dehydropantoate + (6S)-5,6,7,8-tetrahydrofolate. The protein operates within cofactor biosynthesis; (R)-pantothenate biosynthesis; (R)-pantoate from 3-methyl-2-oxobutanoate: step 1/2. In terms of biological role, catalyzes the reversible reaction in which hydroxymethyl group from 5,10-methylenetetrahydrofolate is transferred onto alpha-ketoisovalerate to form ketopantoate. The polypeptide is 3-methyl-2-oxobutanoate hydroxymethyltransferase (Chlorobaculum tepidum (strain ATCC 49652 / DSM 12025 / NBRC 103806 / TLS) (Chlorobium tepidum)).